Here is a 305-residue protein sequence, read N- to C-terminus: UDP-3-O-acyl-N-acetylglucosamine deacetylase (305 aa).

Residues His-78, His-237, and Asp-241 each contribute to the Zn(2+) site. Residue His-264 is the Proton donor of the active site.

The protein belongs to the LpxC family. It depends on Zn(2+) as a cofactor.

It carries out the reaction a UDP-3-O-[(3R)-3-hydroxyacyl]-N-acetyl-alpha-D-glucosamine + H2O = a UDP-3-O-[(3R)-3-hydroxyacyl]-alpha-D-glucosamine + acetate. Its pathway is glycolipid biosynthesis; lipid IV(A) biosynthesis; lipid IV(A) from (3R)-3-hydroxytetradecanoyl-[acyl-carrier-protein] and UDP-N-acetyl-alpha-D-glucosamine: step 2/6. Catalyzes the hydrolysis of UDP-3-O-myristoyl-N-acetylglucosamine to form UDP-3-O-myristoylglucosamine and acetate, the committed step in lipid A biosynthesis. The chain is UDP-3-O-acyl-N-acetylglucosamine deacetylase from Paraburkholderia phytofirmans (strain DSM 17436 / LMG 22146 / PsJN) (Burkholderia phytofirmans).